A 185-amino-acid polypeptide reads, in one-letter code: NAD(P)H-quinone oxidoreductase subunit J (185 aa).

This sequence belongs to the complex I 30 kDa subunit family. In terms of assembly, NDH-1 can be composed of about 15 different subunits; different subcomplexes with different compositions have been identified which probably have different functions.

It is found in the cellular thylakoid membrane. The enzyme catalyses a plastoquinone + NADH + (n+1) H(+)(in) = a plastoquinol + NAD(+) + n H(+)(out). It catalyses the reaction a plastoquinone + NADPH + (n+1) H(+)(in) = a plastoquinol + NADP(+) + n H(+)(out). NDH-1 shuttles electrons from an unknown electron donor, via FMN and iron-sulfur (Fe-S) centers, to quinones in the respiratory and/or the photosynthetic chain. The immediate electron acceptor for the enzyme in this species is believed to be plastoquinone. Couples the redox reaction to proton translocation, and thus conserves the redox energy in a proton gradient. Cyanobacterial NDH-1 also plays a role in inorganic carbon-concentration. The chain is NAD(P)H-quinone oxidoreductase subunit J from Prochlorococcus marinus (strain MIT 9303).